Consider the following 83-residue polypeptide: Cytochrome b559 subunit alpha (83 aa).

The chain crosses the membrane as a helical span at residues 21–35 (VIHSITIPSLFIAGW). Position 23 (His-23) interacts with heme.

It belongs to the PsbE/PsbF family. Heterodimer of an alpha subunit and a beta subunit. PSII is composed of 1 copy each of membrane proteins PsbA, PsbB, PsbC, PsbD, PsbE, PsbF, PsbH, PsbI, PsbJ, PsbK, PsbL, PsbM, PsbT, PsbX, PsbY, PsbZ, Psb30/Ycf12, at least 3 peripheral proteins of the oxygen-evolving complex and a large number of cofactors. It forms dimeric complexes. Heme b serves as cofactor.

It localises to the plastid. The protein resides in the chloroplast thylakoid membrane. In terms of biological role, this b-type cytochrome is tightly associated with the reaction center of photosystem II (PSII). PSII is a light-driven water:plastoquinone oxidoreductase that uses light energy to abstract electrons from H(2)O, generating O(2) and a proton gradient subsequently used for ATP formation. It consists of a core antenna complex that captures photons, and an electron transfer chain that converts photonic excitation into a charge separation. The protein is Cytochrome b559 subunit alpha of Acorus calamus (Sweet flag).